Reading from the N-terminus, the 314-residue chain is Ribonucleoside-diphosphate reductase small subunit (314 aa).

Fe cation-binding residues include Asp73, Glu103, and His106. Tyr110 is an active-site residue. A helical membrane pass occupies residues 160-180 (VLMILIEGIFFSSSFAAIAYL). Residues Glu166, Glu200, and His203 each contribute to the Fe cation site.

Belongs to the ribonucleoside diphosphate reductase small chain family. As to quaternary structure, heterotetramer composed of a homodimer of the large subunit (R1) and a homodimer of the small subunit (R2). Larger multisubunit protein complex are also active, composed of (R1)n(R2)n. The cofactor is Fe cation.

It localises to the host membrane. The catalysed reaction is a 2'-deoxyribonucleoside 5'-diphosphate + [thioredoxin]-disulfide + H2O = a ribonucleoside 5'-diphosphate + [thioredoxin]-dithiol. Functionally, ribonucleoside-diphosphate reductase holoenzyme provides the precursors necessary for viral DNA synthesis. Allows virus growth in non-dividing cells, as well as reactivation from latency in infected hosts. Catalyzes the biosynthesis of deoxyribonucleotides from the corresponding ribonucleotides. This chain is Ribonucleoside-diphosphate reductase small subunit, found in Bovine herpesvirus 1.1 (strain Cooper) (BoHV-1).